A 264-amino-acid polypeptide reads, in one-letter code: 5'-nucleotidase SurE (264 aa).

A divalent metal cation-binding residues include Asp10, Asp11, Ser43, and Asn97.

It belongs to the SurE nucleotidase family. A divalent metal cation is required as a cofactor.

It localises to the cytoplasm. It carries out the reaction a ribonucleoside 5'-phosphate + H2O = a ribonucleoside + phosphate. Nucleotidase that shows phosphatase activity on nucleoside 5'-monophosphates. In Sulfurimonas denitrificans (strain ATCC 33889 / DSM 1251) (Thiomicrospira denitrificans (strain ATCC 33889 / DSM 1251)), this protein is 5'-nucleotidase SurE.